A 199-amino-acid polypeptide reads, in one-letter code: Small ribosomal subunit protein uS4 (199 aa).

Residues 94–157 (SRLDNLVYRA…RKLKLVQEAL (64 aa)) form the S4 RNA-binding domain.

This sequence belongs to the universal ribosomal protein uS4 family. In terms of assembly, part of the 30S ribosomal subunit. Contacts protein S5. The interaction surface between S4 and S5 is involved in control of translational fidelity.

Functionally, one of the primary rRNA binding proteins, it binds directly to 16S rRNA where it nucleates assembly of the body of the 30S subunit. In terms of biological role, with S5 and S12 plays an important role in translational accuracy. This is Small ribosomal subunit protein uS4 from Mycoplasmopsis synoviae (strain 53) (Mycoplasma synoviae).